Consider the following 299-residue polypeptide: Farnesyl diphosphate synthase (299 aa).

Isopentenyl diphosphate is bound by residues Lys45, Arg48, and His77. The Mg(2+) site is built by Asp84 and Asp90. Residue Arg95 coordinates (2E)-geranyl diphosphate. Residue Arg96 participates in isopentenyl diphosphate binding. 4 residues coordinate (2E)-geranyl diphosphate: Lys181, Thr182, Gln220, and Lys237.

The protein belongs to the FPP/GGPP synthase family. Mg(2+) serves as cofactor.

It is found in the cytoplasm. It catalyses the reaction isopentenyl diphosphate + (2E)-geranyl diphosphate = (2E,6E)-farnesyl diphosphate + diphosphate. This is Farnesyl diphosphate synthase (ispA) from Escherichia coli (strain K12).